The sequence spans 188 residues: uncharacterized protein (188 aa).

The tract at residues 57-80 (NDDVAPVAEGPKQERRSPSRNIGR) is disordered.

It belongs to the transposase 25 family.

This is an uncharacterized protein from Sinorhizobium fredii (strain NBRC 101917 / NGR234).